A 92-amino-acid polypeptide reads, in one-letter code: Non-specific lipid-transfer protein 1 (92 aa).

4 cysteine pairs are disulfide-bonded: Cys-4–Cys-52, Cys-14–Cys-28, Cys-29–Cys-74, and Cys-50–Cys-88.

The protein belongs to the plant LTP family. As to expression, expressed in seeds and, at very low levels, in pulp of fruit (at protein level).

Functionally, plant non-specific lipid-transfer proteins transfer phospholipids as well as galactolipids across membranes. May play a role in wax or cutin deposition in the cell walls of expanding epidermal cells and certain secretory tissues. The chain is Non-specific lipid-transfer protein 1 from Actinidia deliciosa (Kiwi).